Reading from the N-terminus, the 944-residue chain is Leucine--tRNA ligase 2 (944 aa).

Positions 36–46 (PYPNSPFHLGH) match the 'HIGH' region motif. The 'KMSKS' region motif lies at 621 to 625 (KMSKS). Lys624 is a binding site for ATP.

Belongs to the class-I aminoacyl-tRNA synthetase family.

It is found in the cytoplasm. It carries out the reaction tRNA(Leu) + L-leucine + ATP = L-leucyl-tRNA(Leu) + AMP + diphosphate. The chain is Leucine--tRNA ligase 2 from Sulfurisphaera tokodaii (strain DSM 16993 / JCM 10545 / NBRC 100140 / 7) (Sulfolobus tokodaii).